The sequence spans 458 residues: Argininosuccinate lyase (458 aa).

It belongs to the lyase 1 family. Argininosuccinate lyase subfamily.

It is found in the cytoplasm. It catalyses the reaction 2-(N(omega)-L-arginino)succinate = fumarate + L-arginine. The protein operates within amino-acid biosynthesis; L-arginine biosynthesis; L-arginine from L-ornithine and carbamoyl phosphate: step 3/3. In Salmonella dublin (strain CT_02021853), this protein is Argininosuccinate lyase.